The sequence spans 119 residues: Acidic phospholipase A2 2 (119 aa).

Intrachain disulfides connect Cys11–Cys71, Cys26–Cys118, Cys28–Cys44, Cys43–Cys99, Cys50–Cys92, Cys60–Cys85, and Cys78–Cys90. Ca(2+)-binding residues include Tyr27, Gly29, and Gly31. Residue His47 is part of the active site. Asp48 provides a ligand contact to Ca(2+). Asp93 is an active-site residue.

This sequence belongs to the phospholipase A2 family. Group I subfamily. D49 sub-subfamily. In terms of assembly, homotrimer. Ca(2+) is required as a cofactor. Expressed by the venom gland.

Its subcellular location is the secreted. The catalysed reaction is a 1,2-diacyl-sn-glycero-3-phosphocholine + H2O = a 1-acyl-sn-glycero-3-phosphocholine + a fatty acid + H(+). Functionally, PLA2 catalyzes the calcium-dependent hydrolysis of the 2-acyl groups in 3-sn-phosphoglycerides. The protein is Acidic phospholipase A2 2 of Naja naja (Indian cobra).